Here is a 543-residue protein sequence, read N- to C-terminus: Chaperonin GroEL (543 aa).

ATP contacts are provided by residues 31–34 (TMGP), 88–92 (DGTTT), G415, 479–481 (DAL), and D495.

The protein belongs to the chaperonin (HSP60) family. In terms of assembly, forms a cylinder of 14 subunits composed of two heptameric rings stacked back-to-back. Interacts with the co-chaperonin GroES.

Its subcellular location is the cytoplasm. The catalysed reaction is ATP + H2O + a folded polypeptide = ADP + phosphate + an unfolded polypeptide.. Together with its co-chaperonin GroES, plays an essential role in assisting protein folding. The GroEL-GroES system forms a nano-cage that allows encapsulation of the non-native substrate proteins and provides a physical environment optimized to promote and accelerate protein folding. This Clostridium tetani (strain Massachusetts / E88) protein is Chaperonin GroEL.